The sequence spans 131 residues: MYAVIRAGSKQFRVSPGDVIKVDSAPHSESGKLEIADVLAVSNGQGKFGSPENATVTAEILGDGRGDKILVFHYKRKKQYKKLQGHRQGFTALKITEINVDGEKFTIDDMPKKEAAPAKARRSTKKAAAAE.

A compositionally biased stretch (basic and acidic residues) spans 106–116 (TIDDMPKKEAA). The disordered stretch occupies residues 106–131 (TIDDMPKKEAAPAKARRSTKKAAAAE).

Belongs to the bacterial ribosomal protein bL21 family. Part of the 50S ribosomal subunit. Contacts protein L20.

This protein binds to 23S rRNA in the presence of protein L20. The chain is Large ribosomal subunit protein bL21 from Koribacter versatilis (strain Ellin345).